A 27-amino-acid polypeptide reads, in one-letter code: Allergen C-C (27 aa).

The protein belongs to the protease inhibitor I6 (cereal trypsin/alpha-amylase inhibitor) family.

Its subcellular location is the secreted. The sequence is that of Allergen C-C from Triticum aestivum (Wheat).